Consider the following 123-residue polypeptide: uncharacterized protein (123 aa).

Positions 1–20 are cleaved as a signal peptide; it reads MARTLALRASAGLVAGMAMA.

This is an uncharacterized protein from Mycobacterium bovis (strain ATCC BAA-935 / AF2122/97).